We begin with the raw amino-acid sequence, 224 residues long: Flagellar L-ring protein (224 aa).

An N-terminal signal peptide occupies residues 1–15 (MLRYLMVGSLLVLAG). Residue Cys-16 is the site of N-palmitoyl cysteine attachment. Cys-16 carries S-diacylglycerol cysteine lipidation.

The protein belongs to the FlgH family. The basal body constitutes a major portion of the flagellar organelle and consists of four rings (L,P,S, and M) mounted on a central rod.

It is found in the cell outer membrane. The protein resides in the bacterial flagellum basal body. Functionally, assembles around the rod to form the L-ring and probably protects the motor/basal body from shearing forces during rotation. The polypeptide is Flagellar L-ring protein (Shewanella amazonensis (strain ATCC BAA-1098 / SB2B)).